Here is a 293-residue protein sequence, read N- to C-terminus: Ribosomal protein L11 methyltransferase (293 aa).

The S-adenosyl-L-methionine site is built by Thr145, Gly166, Asp188, and Asn230.

The protein belongs to the methyltransferase superfamily. PrmA family.

The protein resides in the cytoplasm. It catalyses the reaction L-lysyl-[protein] + 3 S-adenosyl-L-methionine = N(6),N(6),N(6)-trimethyl-L-lysyl-[protein] + 3 S-adenosyl-L-homocysteine + 3 H(+). Its function is as follows. Methylates ribosomal protein L11. In Salmonella arizonae (strain ATCC BAA-731 / CDC346-86 / RSK2980), this protein is Ribosomal protein L11 methyltransferase.